The sequence spans 437 residues: Trigger factor (437 aa).

Positions 163–248 constitute a PPIase FKBP-type domain; it reads DDRVTVDFEG…VKKIEASHLP (86 aa).

This sequence belongs to the FKBP-type PPIase family. Tig subfamily.

It is found in the cytoplasm. The enzyme catalyses [protein]-peptidylproline (omega=180) = [protein]-peptidylproline (omega=0). Involved in protein export. Acts as a chaperone by maintaining the newly synthesized protein in an open conformation. Functions as a peptidyl-prolyl cis-trans isomerase. The protein is Trigger factor of Variovorax paradoxus (strain S110).